A 545-amino-acid chain; its full sequence is Glucose-6-phosphate isomerase (545 aa).

Residue glutamate 351 is the Proton donor of the active site. Residues histidine 382 and lysine 510 contribute to the active site.

The protein belongs to the GPI family.

Its subcellular location is the cytoplasm. It carries out the reaction alpha-D-glucose 6-phosphate = beta-D-fructose 6-phosphate. Its pathway is carbohydrate biosynthesis; gluconeogenesis. The protein operates within carbohydrate degradation; glycolysis; D-glyceraldehyde 3-phosphate and glycerone phosphate from D-glucose: step 2/4. Catalyzes the reversible isomerization of glucose-6-phosphate to fructose-6-phosphate. The chain is Glucose-6-phosphate isomerase from Helicobacter pylori (strain J99 / ATCC 700824) (Campylobacter pylori J99).